Here is a 145-residue protein sequence, read N- to C-terminus: Hemoglobin subunit beta (145 aa).

The 145-residue stretch at 1 to 145 (MLTAEEKAAV…VANALAHRYH (145 aa)) folds into the Globin domain. Residue Thr11 is modified to Phosphothreonine. N6-acetyllysine is present on Lys58. His62 is a binding site for heme b. Position 81 is an N6-acetyllysine (Lys81). Heme b is bound at residue His91. Cys92 is modified (S-nitrosocysteine).

This sequence belongs to the globin family. As to quaternary structure, heterotetramer of two alpha chains and two beta chains. As to expression, red blood cells.

In terms of biological role, involved in oxygen transport from the lung to the various peripheral tissues. This Ovis aries musimon (Mouflon) protein is Hemoglobin subunit beta (HBB).